The following is a 351-amino-acid chain: Putative [LysW]-L-2-aminoadipate/[LysW]-L-glutamate phosphate reductase (351 aa).

NADP(+)-binding positions include 10–13 (SGFT) and 34–36 (SRK). The active site involves Cys-151. Asn-318 is a binding site for NADP(+).

Belongs to the NAGSA dehydrogenase family. Type 1 subfamily. LysY sub-subfamily.

The protein localises to the cytoplasm. It carries out the reaction [amino-group carrier protein]-C-terminal-N-(1-carboxy-5-oxopentan-1-yl)-L-glutamine + phosphate + NADP(+) = [amino-group carrier protein]-C-terminal-N-(1-carboxy-5-phosphooxy-5-oxopentan-1-yl)-L-glutamine + NADPH + H(+). The enzyme catalyses [amino-group carrier protein]-C-terminal-gamma-(L-glutamyl-5-semialdehyde)-L-glutamate + phosphate + NADP(+) = [amino-group carrier protein]-C-terminal-gamma-(5-phospho-L-glutamyl)-L-glutamate + NADPH + H(+). Its pathway is amino-acid biosynthesis; L-lysine biosynthesis via AAA pathway; L-lysine from L-alpha-aminoadipate (Thermus route): step 3/5. It functions in the pathway amino-acid biosynthesis; L-arginine biosynthesis. Its function is as follows. Involved in both the arginine and lysine biosynthetic pathways. The polypeptide is Putative [LysW]-L-2-aminoadipate/[LysW]-L-glutamate phosphate reductase (Pyrobaculum calidifontis (strain DSM 21063 / JCM 11548 / VA1)).